Reading from the N-terminus, the 434-residue chain is Protein arginine N-methyltransferase 2 (434 aa).

The segment at 155-198 is disordered; it reads IQGEETTEEERKEEEPSNTSDIIDEQKVEQPKEDLKEDPSSNQE. The span at 178–193 shows a compositional bias: basic and acidic residues; sequence DEQKVEQPKEDLKEDP. The 242-residue stretch at 193 to 434 folds into the RMT2 domain; it reads PSSNQETYLK…YHPEARFMDV (242 aa). Residues Tyr-200, Met-230, 258–263, 279–281, 306–307, and Asp-327 contribute to the S-adenosyl-L-methionine site; these read FGMGII, EAH, and WQ.

The protein belongs to the class I-like SAM-binding methyltransferase superfamily. RMT2 methyltransferase family. Monomer.

It is found in the cytoplasm. The protein resides in the nucleus. S-adenosyl-L-methionine-dependent protein-arginine N-methyltransferase that methylates the delta-nitrogen atom of arginine residues to form N5-methylarginine (type IV) in target proteins. Monomethylates ribosomal protein L12. The sequence is that of Protein arginine N-methyltransferase 2 from Debaryomyces hansenii (strain ATCC 36239 / CBS 767 / BCRC 21394 / JCM 1990 / NBRC 0083 / IGC 2968) (Yeast).